Reading from the N-terminus, the 138-residue chain is DNA-directed RNA polymerase subunit omega (138 aa).

The disordered stretch occupies residues 101 to 138 (AEDDDTLEADGLTIHDGADSDLDLSDDAGQDTDEADED). Residues 119 to 138 (DSDLDLSDDAGQDTDEADED) show a composition bias toward acidic residues.

This sequence belongs to the RNA polymerase subunit omega family. As to quaternary structure, the RNAP catalytic core consists of 2 alpha, 1 beta, 1 beta' and 1 omega subunit. When a sigma factor is associated with the core the holoenzyme is formed, which can initiate transcription.

The catalysed reaction is RNA(n) + a ribonucleoside 5'-triphosphate = RNA(n+1) + diphosphate. Its function is as follows. Promotes RNA polymerase assembly. Latches the N- and C-terminal regions of the beta' subunit thereby facilitating its interaction with the beta and alpha subunits. This chain is DNA-directed RNA polymerase subunit omega, found in Rhodospirillum rubrum (strain ATCC 11170 / ATH 1.1.1 / DSM 467 / LMG 4362 / NCIMB 8255 / S1).